The primary structure comprises 83 residues: MGSDCGCGGYLWSMLKRVEIEVDDDLIQKVIRRYRVKGAREAVNLALRTLLGEADTAEHGHDDEYDEFSDPNAWVPRRSRDTG.

The disordered stretch occupies residues 58-83 (EHGHDDEYDEFSDPNAWVPRRSRDTG).

This is an uncharacterized protein from Mycobacterium tuberculosis (strain CDC 1551 / Oshkosh).